The chain runs to 254 residues: Probable pectate lyase E (254 aa).

An N-terminal signal peptide occupies residues 1–17 (MYQPLLLLPLLLTSAFA). N-linked (GlcNAc...) asparagine glycosylation is present at N175. The segment at 227-254 (TDNNDKEPKKKGSGPSNACKYKEPLSKC) is disordered.

The protein belongs to the polysaccharide lyase 3 family. The cofactor is Ca(2+).

The protein localises to the secreted. The catalysed reaction is Eliminative cleavage of (1-&gt;4)-alpha-D-galacturonan to give oligosaccharides with 4-deoxy-alpha-D-galact-4-enuronosyl groups at their non-reducing ends.. In terms of biological role, pectinolytic enzyme consist of four classes of enzymes: pectin lyase, polygalacturonase, pectin methylesterase and rhamnogalacturonase. Among pectinolytic enzymes, pectin lyase is the most important in depolymerization of pectin, since it cleaves internal glycosidic bonds of highly methylated pectins. Favors pectate, the anion, over pectin, the methyl ester. The polypeptide is Probable pectate lyase E (plyE) (Neosartorya fischeri (strain ATCC 1020 / DSM 3700 / CBS 544.65 / FGSC A1164 / JCM 1740 / NRRL 181 / WB 181) (Aspergillus fischerianus)).